Here is a 415-residue protein sequence, read N- to C-terminus: Lysosome-associated membrane glycoprotein 2 (415 aa).

A signal peptide spans 1-25; that stretch reads MCLSPVKGAKLILIFLFLGAVQSNA. The interval 26–188 is first lumenal domain; it reads LIVNLTDSKG…SKNEQVCEED (163 aa). At 26–379 the chain is on the lumenal side; it reads LIVNLTDSKG…AQDCSADEDN (354 aa). Residues Asn29, Asn45, Asn54, Asn57, Asn97, Asn115, and Asn175 are each glycosylated (N-linked (GlcNAc...) asparagine). Cys37 and Cys75 form a disulfide bridge. A disulfide bond links Cys149 and Cys185. Positions 189 to 233 are hinge; that stretch reads QTPTTVAPIIHTTAPSTTTTLTPTSTPTPTPTPTPTVGNYSIRNG. Positions 202 to 213 are enriched in low complexity; that stretch reads APSTTTTLTPTS. The disordered stretch occupies residues 202 to 227; the sequence is APSTTTTLTPTSTPTPTPTPTPTVGN. 9 N-linked (GlcNAc...) asparagine glycosylation sites follow: Asn227, Asn234, Asn247, Asn265, Asn280, Asn312, Asn317, Asn322, and Asn361. Residues 234 to 379 form a second lumenal domain region; sequence NTTCLLATMG…AQDCSADEDN (146 aa). Cys237 and Cys270 are disulfide-bonded. Cys336 and Cys373 are joined by a disulfide. The helical transmembrane segment at 380–404 threads the bilayer; that stretch reads FLVPIAVGAALGGVLILVLLAYFIG. Residues 405–415 are Cytoplasmic-facing; sequence LKRHHTGYEQF. Residues 406 to 409 form an important for binding and subsequent lysosomal degradation of target proteins region; it reads KRHH.

This sequence belongs to the LAMP family. In terms of assembly, monomer. Forms large homooligomers. Interacts (via its cytoplasmic region) with HSPA8; HSPA8 mediates recruitment of proteins with a KFERQ motif to the surface of the lysosome for chaperone-mediated autophagy. Interacts with HSP90 in the lysosome lumen; this enhances LAMP2 stability. Interacts with MLLT11. Interacts with ABCB9. Interacts with FURIN. Interacts with CT55; this interaction may be important for LAMP2 protein stability. Interacts with TMEM175; inhibiting the proton channel activity of TMEM175. Forms a ternary complex with RAB7A and RUFY4 (via RUN domain); the interaction with RAB7A is mediated by RUFY4 (via RUN and coiled coil domains). Post-translationally, extensively N-glycosylated. Contains a minor proportion of O-linked glycans. In terms of tissue distribution, detected in liver and kidney (at protein level). Detected in liver and kidney.

It localises to the lysosome membrane. The protein resides in the endosome membrane. Its subcellular location is the cytoplasmic vesicle. The protein localises to the autophagosome membrane. It is found in the cell membrane. Functionally, lysosomal membrane glycoprotein which plays an important role in lysosome biogenesis, lysosomal pH regulation and autophagy. Acts as an important regulator of lysosomal lumen pH regulation by acting as a direct inhibitor of the proton channel TMEM175, facilitating lysosomal acidification for optimal hydrolase activity. Plays an important role in chaperone-mediated autophagy, a process that mediates lysosomal degradation of proteins in response to various stresses and as part of the normal turnover of proteins with a long biological half-live. Functions by binding target proteins, such as GAPDH, NLRP3 and MLLT11, and targeting them for lysosomal degradation. In the chaperone-mediated autophagy, acts downstream of chaperones, such as HSPA8/HSC70, which recognize and bind substrate proteins and mediate their recruitment to lysosomes, where target proteins bind LAMP2. Plays a role in lysosomal protein degradation in response to starvation. Required for the fusion of autophagosomes with lysosomes during autophagy. Cells that lack LAMP2 express normal levels of VAMP8, but fail to accumulate STX17 on autophagosomes, which is the most likely explanation for the lack of fusion between autophagosomes and lysosomes. Required for normal degradation of the contents of autophagosomes. Required for efficient MHC class II-mediated presentation of exogenous antigens via its function in lysosomal protein degradation; antigenic peptides generated by proteases in the endosomal/lysosomal compartment are captured by nascent MHC II subunits. Is not required for efficient MHC class II-mediated presentation of endogenous antigens. This Mus musculus (Mouse) protein is Lysosome-associated membrane glycoprotein 2 (Lamp2).